The primary structure comprises 362 residues: Phosphoserine aminotransferase (362 aa).

R42 serves as a coordination point for L-glutamate. Pyridoxal 5'-phosphate-binding positions include 76-77 (AR), W102, T152, D172, and Q195. K196 carries the N6-(pyridoxal phosphate)lysine modification. 237–238 (NT) lines the pyridoxal 5'-phosphate pocket.

It belongs to the class-V pyridoxal-phosphate-dependent aminotransferase family. SerC subfamily. Homodimer. Pyridoxal 5'-phosphate is required as a cofactor.

Its subcellular location is the cytoplasm. The catalysed reaction is O-phospho-L-serine + 2-oxoglutarate = 3-phosphooxypyruvate + L-glutamate. It carries out the reaction 4-(phosphooxy)-L-threonine + 2-oxoglutarate = (R)-3-hydroxy-2-oxo-4-phosphooxybutanoate + L-glutamate. Its pathway is amino-acid biosynthesis; L-serine biosynthesis; L-serine from 3-phospho-D-glycerate: step 2/3. It functions in the pathway cofactor biosynthesis; pyridoxine 5'-phosphate biosynthesis; pyridoxine 5'-phosphate from D-erythrose 4-phosphate: step 3/5. In terms of biological role, catalyzes the reversible conversion of 3-phosphohydroxypyruvate to phosphoserine and of 3-hydroxy-2-oxo-4-phosphonooxybutanoate to phosphohydroxythreonine. This Haemophilus influenzae (strain ATCC 51907 / DSM 11121 / KW20 / Rd) protein is Phosphoserine aminotransferase.